The chain runs to 394 residues: Putative transporter AraJ (394 aa).

The Cytoplasmic portion of the chain corresponds to 1 to 4 (MKKV). A helical transmembrane segment spans residues 5–27 (ILSLALGTFGLGMAEFGIMGVLT). The Periplasmic segment spans residues 28-41 (ELAHNVGISIPAAG). The helical transmembrane segment at 42–63 (HMISYYALGVVVGAPIIALFSS) threads the bilayer. Residues 64-69 (RYSLKH) lie on the Cytoplasmic side of the membrane. A helical transmembrane segment spans residues 70-89 (ILLFLVALCVIGNAMFTLSS). Residues 90–93 (SYLM) lie on the Periplasmic side of the membrane. The chain crosses the membrane as a helical span at residues 94–116 (LAIGRLVSGFPHGAFFGVGAIVL). The Cytoplasmic segment spans residues 117 to 128 (SKIIKPGKVTAA). Residues 129-151 (VAGMVSGMTVANLLGIPLGTYLS) traverse the membrane as a helical segment. Over 152–155 (QEFS) the chain is Periplasmic. Residues 156–178 (WRYTFLLIAVFNIAVMASVYFWV) form a helical membrane-spanning segment. Residues 179–198 (PDIRDEAKGNLREQFHFLRS) are Cytoplasmic-facing. Residues 199–221 (PAPWLIFAATMFGNAGVFAWFSY) traverse the membrane as a helical segment. Topologically, residues 222–235 (VKPYMMFISGFSET) are periplasmic. A helical membrane pass occupies residues 236-255 (AMTFIMMLVGLGMVLGNMLS). Topologically, residues 256 to 261 (GRISGR) are cytoplasmic. Residues 262–284 (YSPLRIAAVTDFIIVLALLMLFF) traverse the membrane as a helical segment. Topologically, residues 285-293 (CGGMKTTSL) are periplasmic. The chain crosses the membrane as a helical span at residues 294 to 316 (IFAFICCAGLFALSAPLQILLLQ). The Cytoplasmic segment spans residues 317-322 (NAKGGE). Residues 323–342 (LLGAAGGQIAFNLGSAVGAY) form a helical membrane-spanning segment. At 343–351 (CGGMMLTLG) the chain is on the periplasmic side. A helical transmembrane segment spans residues 352–374 (LAYNYVALPAALLSFAAMSSLLL). Topologically, residues 375-394 (YGRYKRQQAADTPVLAKPLG) are cytoplasmic.

This sequence belongs to the major facilitator superfamily.

The protein localises to the cell inner membrane. In terms of biological role, may be involved in either the transport or processing of arabinose polymers. This Escherichia coli (strain K12) protein is Putative transporter AraJ (araJ).